The sequence spans 110 residues: Small ribosomal subunit protein uS10 (110 aa).

It belongs to the universal ribosomal protein uS10 family. Part of the 30S ribosomal subunit.

Functionally, involved in the binding of tRNA to the ribosomes. In Coxiella burnetii (strain Dugway 5J108-111), this protein is Small ribosomal subunit protein uS10.